The sequence spans 466 residues: Adenylosuccinate lyase (466 aa).

Substrate is bound by residues Arg21 to Tyr22, Asn97 to Asp99, and Thr130 to Ser131. His180 serves as the catalytic Proton donor/acceptor. Position 259 (Gln259) interacts with substrate. Ser307 (proton donor/acceptor) is an active-site residue. Positions 347, 352, and 356 each coordinate substrate.

Belongs to the lyase 1 family. Adenylosuccinate lyase subfamily. In terms of assembly, homotetramer. Residues from neighboring subunits contribute catalytic and substrate-binding residues to each active site.

The enzyme catalyses N(6)-(1,2-dicarboxyethyl)-AMP = fumarate + AMP. The catalysed reaction is (2S)-2-[5-amino-1-(5-phospho-beta-D-ribosyl)imidazole-4-carboxamido]succinate = 5-amino-1-(5-phospho-beta-D-ribosyl)imidazole-4-carboxamide + fumarate. It participates in purine metabolism; AMP biosynthesis via de novo pathway; AMP from IMP: step 2/2. The protein operates within purine metabolism; IMP biosynthesis via de novo pathway; 5-amino-1-(5-phospho-D-ribosyl)imidazole-4-carboxamide from 5-amino-1-(5-phospho-D-ribosyl)imidazole-4-carboxylate: step 2/2. The sequence is that of Adenylosuccinate lyase (purB) from Dictyostelium discoideum (Social amoeba).